The following is a 144-amino-acid chain: Grifin (144 aa).

Residues 5–133 (FEAFCAGGLA…DHQLAQVELA (129 aa)) form the Galectin domain. At serine 138 the chain carries Phosphoserine.

In terms of assembly, homodimer. Lens-specific. Located at the interface between lens fiber cells (at protein level).

The sequence is that of Grifin (Grifin) from Rattus norvegicus (Rat).